Consider the following 464-residue polypeptide: Type I restriction enzyme EcoKI specificity subunit (464 aa).

This sequence belongs to the type-I restriction system S methylase family. The type I restriction/modification system is composed of three polypeptides R, M and S. The restriction enzyme has stoichiometry R(2)M(2)S(1). The methyltransferase is composed of M(2)S(1). In terms of assembly, (Microbial infection) Interacts with Escherichia phage T7 protein Ocr; this interaction leads to the inhibition of the methyltransferase restriction enzyme M.EcoKI composed of M(2)S(1).

In terms of biological role, the specificity (S) subunit of a type I restriction enzyme; this subunit dictates DNA sequence specificity. The M and S subunits together form a methyltransferase (MTase) that methylates A-2 on the top and A-3 on the bottom strand of the sequence 5'-AACN(6)GTGC-3'. In the presence of the R subunit the complex can also act as an endonuclease, binding to the same target sequence but cutting the DNA some distance from this site. Whether the DNA is cut or modified depends on the methylation state of the target sequence. When the target site is unmodified, the DNA is cut. When the target site is hemimethylated, the complex acts as a maintenance MTase modifying the DNA so that both strands become methylated. After locating a non-methylated recognition site, the enzyme complex serves as a molecular motor that translocates DNA in an ATP-dependent manner until a collision occurs that triggers cleavage. The polypeptide is Type I restriction enzyme EcoKI specificity subunit (Escherichia coli (strain K12)).